The following is a 37-amino-acid chain: MGQVEKARQGQFARPHHSDSQRRVRAWSRIQRRARSF.

The segment at 1 to 37 (MGQVEKARQGQFARPHHSDSQRRVRAWSRIQRRARSF) is disordered. The span at 23–37 (RVRAWSRIQRRARSF) shows a compositional bias: basic residues.

This is an uncharacterized protein from Bacillus phage phi105 (Bacteriophage phi-105).